The chain runs to 151 residues: UPF0178 protein YaiI (151 aa).

It belongs to the UPF0178 family.

This is UPF0178 protein YaiI from Salmonella agona (strain SL483).